A 372-amino-acid chain; its full sequence is Cytochrome b (372 aa).

4 helical membrane passes run 25-45 (FGSM…FLAI), 69-90 (WCLQ…YIHI), 105-125 (WMSG…GYVL), and 170-190 (FFAL…IHII). Heme b contacts are provided by histidine 75 and histidine 89. Residues histidine 174 and histidine 188 each contribute to the heme b site. Histidine 193 provides a ligand contact to a ubiquinone. 4 consecutive transmembrane segments (helical) span residues 218-238 (YKDL…MSFS), 280-300 (LGGT…PFTH), 312-332 (MAQF…WAAS), and 339-358 (YITI…IINP).

The protein belongs to the cytochrome b family. The cytochrome bc1 complex contains 3 respiratory subunits (MT-CYB, CYC1 and UQCRFS1), 2 core proteins (UQCRC1 and UQCRC2) and probably 6 low-molecular weight proteins. Heme b is required as a cofactor.

The protein localises to the mitochondrion inner membrane. Component of the ubiquinol-cytochrome c reductase complex (complex III or cytochrome b-c1 complex) that is part of the mitochondrial respiratory chain. The b-c1 complex mediates electron transfer from ubiquinol to cytochrome c. Contributes to the generation of a proton gradient across the mitochondrial membrane that is then used for ATP synthesis. This chain is Cytochrome b (MT-CYB), found in Acrochordus granulatus (Rasp-skinned water snake).